The following is a 329-amino-acid chain: MVQKYYESDADPRTLEDKTIAVIGYGSQGRGQALNLRDSGCRVVIGLRPGGSWQKASEDGFEVYSVAEAVKRADVIQILLPDENQAAVYRAEISPNIRENACLMFSHGFNIHYGQIVPPPTVDVVMVAPKGPGHMVRRTYEEGKGVPALIAVHQDATGQARAIALAYARGIGATRAVVFETTFAEETETDLFGEQAVLCGGITSLIKAGFETLVDAGYAPEMAYLEVLHETKLIVDLIYEGGFTKMRDSISNTAQYGDLTRGPRVIGPETYMAMQEILEEIQNGKFAKEWMLENMVNRPVFNALTRADEEHLIEQVGAEIRGFMPQFRK.

One can recognise a KARI N-terminal Rossmann domain in the interval 2 to 181; sequence VQKYYESDAD…GATRAVVFET (180 aa). Residues 25-28, arginine 48, serine 52, and 82-85 each bind NADP(+); these read YGSQ and DENQ. Histidine 107 is a catalytic residue. Glycine 133 contacts NADP(+). The KARI C-terminal knotted domain maps to 182-327; the sequence is TFAEETETDL…AEIRGFMPQF (146 aa). Residues aspartate 190, glutamate 194, glutamate 226, and glutamate 230 each coordinate Mg(2+). Serine 251 serves as a coordination point for substrate.

The protein belongs to the ketol-acid reductoisomerase family. The cofactor is Mg(2+).

It carries out the reaction (2R)-2,3-dihydroxy-3-methylbutanoate + NADP(+) = (2S)-2-acetolactate + NADPH + H(+). The enzyme catalyses (2R,3R)-2,3-dihydroxy-3-methylpentanoate + NADP(+) = (S)-2-ethyl-2-hydroxy-3-oxobutanoate + NADPH + H(+). The protein operates within amino-acid biosynthesis; L-isoleucine biosynthesis; L-isoleucine from 2-oxobutanoate: step 2/4. Its pathway is amino-acid biosynthesis; L-valine biosynthesis; L-valine from pyruvate: step 2/4. In terms of biological role, involved in the biosynthesis of branched-chain amino acids (BCAA). Catalyzes an alkyl-migration followed by a ketol-acid reduction of (S)-2-acetolactate (S2AL) to yield (R)-2,3-dihydroxy-isovalerate. In the isomerase reaction, S2AL is rearranged via a Mg-dependent methyl migration to produce 3-hydroxy-3-methyl-2-ketobutyrate (HMKB). In the reductase reaction, this 2-ketoacid undergoes a metal-dependent reduction by NADPH to yield (R)-2,3-dihydroxy-isovalerate. This is Ketol-acid reductoisomerase (NADP(+)) from Methanoculleus marisnigri (strain ATCC 35101 / DSM 1498 / JR1).